Here is a 339-residue protein sequence, read N- to C-terminus: MRVYYDRDADINLIKGKKVVIIGYGSQGHAHALNLKDSGVKDVAIALRKGSATAQKAEAAGFKVMEVAEAAKWADVMMMLTPDELQGDIYREHLHDNMKQGAALLFAHGLNVHFNLIDPRADLDVLMIAPKGPGHTVRGEYLKGGGVPCLIAIHKDSSGNAHDLGLSYASAVGGGRAGIIETTFREECETDLFGEQVVLCGGLVELIKGGFETLVEAGYAPEMAYFECLHEVKLIVDLIYEGGIANMNYSISNTAEYGEYVTGPRIVTSETKKEMKKVLEDIQNGIFTRNWMLENKVNQTSFKATRAKLAEHQIEEVGAKLREMMPWIKKGALVDKSKN.

The 182-residue stretch at 1–182 (MRVYYDRDAD…GGGRAGIIET (182 aa)) folds into the KARI N-terminal Rossmann domain. NADP(+) contacts are provided by residues 24-27 (YGSQ), arginine 48, serine 51, threonine 53, and 83-86 (DELQ). The active site involves histidine 108. Glycine 134 contacts NADP(+). Positions 183 to 328 (TFREECETDL…AKLREMMPWI (146 aa)) constitute a KARI C-terminal knotted domain. 4 residues coordinate Mg(2+): aspartate 191, glutamate 195, glutamate 227, and glutamate 231. Serine 252 contributes to the substrate binding site.

Belongs to the ketol-acid reductoisomerase family. The cofactor is Mg(2+).

The catalysed reaction is (2R)-2,3-dihydroxy-3-methylbutanoate + NADP(+) = (2S)-2-acetolactate + NADPH + H(+). It catalyses the reaction (2R,3R)-2,3-dihydroxy-3-methylpentanoate + NADP(+) = (S)-2-ethyl-2-hydroxy-3-oxobutanoate + NADPH + H(+). The protein operates within amino-acid biosynthesis; L-isoleucine biosynthesis; L-isoleucine from 2-oxobutanoate: step 2/4. It functions in the pathway amino-acid biosynthesis; L-valine biosynthesis; L-valine from pyruvate: step 2/4. Its function is as follows. Involved in the biosynthesis of branched-chain amino acids (BCAA). Catalyzes an alkyl-migration followed by a ketol-acid reduction of (S)-2-acetolactate (S2AL) to yield (R)-2,3-dihydroxy-isovalerate. In the isomerase reaction, S2AL is rearranged via a Mg-dependent methyl migration to produce 3-hydroxy-3-methyl-2-ketobutyrate (HMKB). In the reductase reaction, this 2-ketoacid undergoes a metal-dependent reduction by NADPH to yield (R)-2,3-dihydroxy-isovalerate. The sequence is that of Ketol-acid reductoisomerase (NADP(+)) from Rhodopseudomonas palustris (strain BisA53).